A 314-amino-acid polypeptide reads, in one-letter code: MDGTNGSTQTHFILLGFSDRPHLERILFVVILIAYLLTLVGNTTIILVSRLDPHLHTPMYFFLAHLSFLDLSFTTSSIPQLLYNLNGCDKTISYMGCAIQLFLFLGLGGVECLLLAVMAYDRCVAICKPLHYMVIMNPRLCRGLVSVTWGCGVANSLAMSPVTLRLPRCGHHEVDHFLREMPALIRMACVSTVAIEGTVFVLAVGVVLSPLVFILLSYSYIVRAVLQIRSASGRQKAFGTCGSHLTVVSLFYGNIIYMYMQPGASSSQDQGMFLMLFYNIVTPLLNPLIYTLRNREVKGALGRLLLGKRELGKE.

At 1-25 (MDGTNGSTQTHFILLGFSDRPHLER) the chain is on the extracellular side. N5 is a glycosylation site (N-linked (GlcNAc...) asparagine). A helical transmembrane segment spans residues 26–49 (ILFVVILIAYLLTLVGNTTIILVS). The Cytoplasmic segment spans residues 50–57 (RLDPHLHT). A helical transmembrane segment spans residues 58-79 (PMYFFLAHLSFLDLSFTTSSIP). The Extracellular segment spans residues 80–100 (QLLYNLNGCDKTISYMGCAIQ). A helical transmembrane segment spans residues 101 to 120 (LFLFLGLGGVECLLLAVMAY). The Cytoplasmic portion of the chain corresponds to 121-139 (DRCVAICKPLHYMVIMNPR). The helical transmembrane segment at 140–158 (LCRGLVSVTWGCGVANSLA) threads the bilayer. Residues 159–195 (MSPVTLRLPRCGHHEVDHFLREMPALIRMACVSTVAI) are Extracellular-facing. A helical transmembrane segment spans residues 196–219 (EGTVFVLAVGVVLSPLVFILLSYS). At 220 to 236 (YIVRAVLQIRSASGRQK) the chain is on the cytoplasmic side. A helical membrane pass occupies residues 237-259 (AFGTCGSHLTVVSLFYGNIIYMY). Residues 260–272 (MQPGASSSQDQGM) are Extracellular-facing. The chain crosses the membrane as a helical span at residues 273–292 (FLMLFYNIVTPLLNPLIYTL). Over 293 to 314 (RNREVKGALGRLLLGKRELGKE) the chain is Cytoplasmic.

Belongs to the G-protein coupled receptor 1 family.

It is found in the cell membrane. Its function is as follows. Odorant receptor. The protein is Olfactory receptor 2W3 (OR2W3) of Homo sapiens (Human).